Here is a 610-residue protein sequence, read N- to C-terminus: Transducer of Cdc42-dependent actin assembly protein 2 homolog (610 aa).

An F-BAR domain is found at 1–267; the sequence is MIPVSRFFTV…EVGKIDAEGD (267 aa). A disordered region spans residues 283–315; it reads APFEIEDLGDPKNCDSRTNDSADGSGGKLLKSS. Positions 291–302 are enriched in basic and acidic residues; sequence GDPKNCDSRTND. The region spanning 352–429 is the REM-1 domain; the sequence is SKPAHVRLSC…IHNLKEFYAM (78 aa). Residues 355-385 adopt a coiled-coil conformation; that stretch reads AHVRLSCLRSKIRDMEKQLEQAIQGREGITR. 2 disordered regions span residues 436–487 and 499–519; these read EGQE…SSKN and LISS…RRAE. A compositionally biased stretch (basic and acidic residues) spans 437 to 449; it reads GQERSFGGRDTPD. Positions 453–464 are enriched in low complexity; sequence SMSGSSTNQSSS. Polar residues predominate over residues 475–487; sequence AGNSSSADDSSKN. Positions 501–513 are enriched in low complexity; it reads SSPKTSKSSTPTP. Residues 547 to 610 form the SH3 domain; sequence ETAVTVTALF…VPTSYLQFPQ (64 aa).

It belongs to the FNBP1 family. Interacts (via SH3 domain) with wsp-1 and abi-1. Interacts with cdc-42 and (via SH3 domain) with wve-1.

It localises to the cell junction. The protein resides in the cell membrane. Its subcellular location is the cytoplasmic vesicle. It is found in the cytoplasm. The protein localises to the recycling endosome. Plays a role in protein trafficking, actin organization and embryonic morphogenesis. Potentially acts as a cdc-42 effector. May play a role in egg laying. Together with toca-1, is required for protein trafficking regulating yolk protein clathrin-mediated endocytosis by oocytes during oogenesis and retrograde recycling and the sorting of recycling endosome cargo proteins such as mig-14. Also, together with toca-2, controls the distribution of actin at cell junctions. The sequence is that of Transducer of Cdc42-dependent actin assembly protein 2 homolog from Caenorhabditis elegans.